The primary structure comprises 361 residues: Homer protein homolog 3 (361 aa).

The segment at 1–80 (MSTAREQPIF…TKTSQKFGQW (80 aa)) is required for interaction with NFATC2. Positions 1 to 113 (MSTAREQPIF…EKFQEVKEAA (113 aa)) constitute a WH1 domain. The tract at residues 114-169 (RLAREKSQDGGELTSPALGLASHQVPPSPLVSANGPGEEKLFRSQSADAPGPTERE) is disordered. Phosphoserine is present on residues serine 120 and serine 159. Coiled coils occupy residues 191–243 (ALQD…SEVT) and 254–358 (GQSL…RLAE).

This sequence belongs to the Homer family. As to quaternary structure, tetramer. Isoform 1 and isoform 2 encode coiled-coil structures that mediate homo- and heteromultimerization. Interacts with NFATC2; interaction is calcium independent; interaction competes with PPP3CA for NFATC2 binding; interaction is reduced by AKT activation. Interacts with NFATC1 and NFATC4. Interacts with SHANK1; forms a high-order complex at least composed of SHANK1 and HOMER3; the complex formation is regulated by CAMK2A-mediated phosphorylation.

The protein localises to the cytoplasm. It is found in the postsynaptic density. The protein resides in the synapse. Its function is as follows. Postsynaptic density scaffolding protein. Binds and cross-links cytoplasmic regions of GRM1, GRM5, ITPR1, DNM3, RYR1, RYR2, SHANK1 and SHANK3. By physically linking GRM1 and GRM5 with ER-associated ITPR1 receptors, it aids the coupling of surface receptors to intracellular calcium release. Isoforms can be differently regulated and may play an important role in maintaining the plasticity at glutamatergic synapses. Negatively regulates T cell activation by inhibiting the calcineurin-NFAT pathway. Acts by competing with calcineurin/PPP3CA for NFAT protein binding, hence preventing NFAT activation by PPP3CA. The chain is Homer protein homolog 3 from Homo sapiens (Human).